The following is a 214-amino-acid chain: Pyrrolidone-carboxylate peptidase (214 aa).

Active-site residues include E80, C143, and H166.

It belongs to the peptidase C15 family. Homotetramer.

Its subcellular location is the cytoplasm. The enzyme catalyses Release of an N-terminal pyroglutamyl group from a polypeptide, the second amino acid generally not being Pro.. In terms of biological role, removes 5-oxoproline from various penultimate amino acid residues except L-proline. This chain is Pyrrolidone-carboxylate peptidase, found in Escherichia fergusonii (strain ATCC 35469 / DSM 13698 / CCUG 18766 / IAM 14443 / JCM 21226 / LMG 7866 / NBRC 102419 / NCTC 12128 / CDC 0568-73).